Reading from the N-terminus, the 182-residue chain is Helofensin-3 (182 aa).

The signal sequence occupies residues 1–26 (MQMDWLFIAVISGIGLLSSGVPGTQG). The C(6)C(4)C(9)C(6)CC 1; approximate repeat unit spans residues 27–64 (AYTTEQCRALNGSCNFYACFPKNVIIGKCDWWGWSCCA). One copy of the C(6)C(4)C(9)C(6)CC 2; approximate repeat lies at 65-101 (RTPLERCTAKKGTCTKTGCTKTDTDHGPCDGGAQCCQ). A C(6)C(4)C(9)C(6)CC 3; approximate repeat occupies 102-138 (RDPVKYCKFHGNVCGRGKCPMDHIPIGECTPGYPCCK). One copy of the C(6)C(4)C(9)C(6)CC 4; approximate repeat lies at 139–176 (RDGPAYCKSKGGKCLNRCPQIVPTNVIGVCATGVPCCK).

The protein belongs to the beta-defensin family. Helofensin subfamily. Expressed by the mandibular venom gland.

It is found in the secreted. Its function is as follows. Lethal toxin which possesses an inhibitory effect on direct electrical stimulation of the isolated hemi-diaphragm of mice. Neither hemorrhagic nor hemolytic activities are detected. Phospholipase A2 activity, proteolytic activity and arginine esterolytic activity are absent. The chain is Helofensin-3 from Heloderma suspectum cinctum (Banded Gila monster).